We begin with the raw amino-acid sequence, 160 residues long: Cytochrome b6-f complex subunit 4 (160 aa).

3 helical membrane-spanning segments follow: residues 36 to 56 (LLYM…GLAV), 95 to 115 (LLGV…PFIE), and 131 to 151 (TVFL…TLPI).

This sequence belongs to the cytochrome b family. PetD subfamily. In terms of assembly, the 4 large subunits of the cytochrome b6-f complex are cytochrome b6, subunit IV (17 kDa polypeptide, petD), cytochrome f and the Rieske protein, while the 4 small subunits are petG, petL, petM and petN. The complex functions as a dimer.

It localises to the plastid. The protein resides in the chloroplast thylakoid membrane. Its function is as follows. Component of the cytochrome b6-f complex, which mediates electron transfer between photosystem II (PSII) and photosystem I (PSI), cyclic electron flow around PSI, and state transitions. The protein is Cytochrome b6-f complex subunit 4 of Nephroselmis olivacea (Green alga).